Consider the following 572-residue polypeptide: Mitochondrial chaperone TCM62 (572 aa).

Residues 1–16 (MLRNCLRKLGNHQTKC) constitute a mitochondrion transit peptide. Topologically, residues 17-471 (SVKTLHTPIY…KANEPNFMTK (455 aa)) are mitochondrial matrix. A helical transmembrane segment spans residues 472 to 488 (VGINAVLSAVILPSEVA). At 489–572 (FKNAYGYNYY…VYKKPERHKA (84 aa)) the chain is on the mitochondrial intermembrane side.

The protein belongs to the chaperonin (HSP60) family. In terms of assembly, forms a high molecular mass protein complex of approximately 850 kDa.

Its subcellular location is the mitochondrion inner membrane. In terms of biological role, chaperone. Required for the assembly of succinate dehydrogenase subunits. Ensures mitochondrial gene expression at elevated temperatures and prevents heat-aggregation of the ribosomal subunit VAR1. The sequence is that of Mitochondrial chaperone TCM62 (TCM62) from Saccharomyces cerevisiae (strain YJM789) (Baker's yeast).